The chain runs to 382 residues: 8-amino-7-oxononanoate synthase (382 aa).

Arg-26 contributes to the substrate binding site. 104 to 105 (GY) contacts pyridoxal 5'-phosphate. His-129 is a substrate binding site. Pyridoxal 5'-phosphate contacts are provided by residues Ser-175, 200–203 (DEAH), and 232–235 (TLSK). Lys-235 carries the post-translational modification N6-(pyridoxal phosphate)lysine. Thr-345 is a substrate binding site.

The protein belongs to the class-II pyridoxal-phosphate-dependent aminotransferase family. BioF subfamily. In terms of assembly, homodimer. Requires pyridoxal 5'-phosphate as cofactor.

The catalysed reaction is 6-carboxyhexanoyl-[ACP] + L-alanine + H(+) = (8S)-8-amino-7-oxononanoate + holo-[ACP] + CO2. It participates in cofactor biosynthesis; biotin biosynthesis. In terms of biological role, catalyzes the decarboxylative condensation of pimeloyl-[acyl-carrier protein] and L-alanine to produce 8-amino-7-oxononanoate (AON), [acyl-carrier protein], and carbon dioxide. In Mycobacterium sp. (strain JLS), this protein is 8-amino-7-oxononanoate synthase.